Reading from the N-terminus, the 62-residue chain is Photosystem II reaction center protein Z (62 aa).

The next 2 helical transmembrane spans lie at 8–28 and 41–61; these read VLTA…VAYA and YVGS…NFLV.

It belongs to the PsbZ family. In terms of assembly, PSII is composed of 1 copy each of membrane proteins PsbA, PsbB, PsbC, PsbD, PsbE, PsbF, PsbH, PsbI, PsbJ, PsbK, PsbL, PsbM, PsbT, PsbX, PsbY, PsbZ, Psb30/Ycf12, peripheral proteins PsbO, CyanoQ (PsbQ), PsbU, PsbV and a large number of cofactors. It forms dimeric complexes.

Its subcellular location is the cellular thylakoid membrane. May control the interaction of photosystem II (PSII) cores with the light-harvesting antenna, regulates electron flow through the 2 photosystem reaction centers. PSII is a light-driven water plastoquinone oxidoreductase, using light energy to abstract electrons from H(2)O, generating a proton gradient subsequently used for ATP formation. The protein is Photosystem II reaction center protein Z of Crocosphaera subtropica (strain ATCC 51142 / BH68) (Cyanothece sp. (strain ATCC 51142)).